A 571-amino-acid chain; its full sequence is uncharacterized protein (571 aa).

Positions 1–25 (MAPSVATSLKAEILPSPRTSSPSSN) are disordered. In terms of domain architecture, FAD-binding FR-type spans 135–389 (FSVFPAPILD…RGLHKNAFAT (255 aa)). The tract at residues 447–479 (NPLQKSSDDDASSTVSQQTETEMDSFEVKKDGT) is disordered.

The protein belongs to the flavoprotein pyridine nucleotide cytochrome reductase family. The cofactor is FAD.

This is an uncharacterized protein from Schizosaccharomyces pombe (strain 972 / ATCC 24843) (Fission yeast).